We begin with the raw amino-acid sequence, 1294 residues long: ATPase PglY (1294 aa).

A disordered region spans residues 1205 to 1263; sequence TQAAATPPPAPAASQPTAGDLSLDTPTSDPRIPYTSQETPTSSGGAGTARTSGGRRTTA. Over residues 1228–1244 the composition is skewed to polar residues; that stretch reads DTPTSDPRIPYTSQETP. Over residues 1252 to 1263 the composition is skewed to low complexity; sequence TARTSGGRRTTA.

BREX systems (bacteriophage exclusion) provide immunity against bacteriophage. Part of a type 2 BREX system. Previously called the phage growth limitation (Pgl) system, it confers protection against bacteriophage phiC31. The bacteria allows one cycle of phage infection, but subsequent cycles are impaired, protecting the original bacterial colony. The system undergoes high rates (10(-3) to 10(-4)) of phase reversion, i.e. loss and regain of phiC31 resistance. When the pglW-pglX-pglY-pglZ genes are transformed into a susceptible S.lividans (strain 1326) they confer resistance to infection by phage phiC31 and phiBT1; all 4 genes are necessary. Functionally, hydrolyzes ATP but not AMP, ADP, GMP, GDP or GTP; activity is inhibited by the non-hydrolyzable ATP analog 5-adenylyl beta,gamma-imidodiphosphate. The protein is ATPase PglY of Streptomyces coelicolor (strain ATCC BAA-471 / A3(2) / M145).